A 23-amino-acid polypeptide reads, in one-letter code: Phallacidin proprotein (23 aa).

A propeptide is located at residue Pro-1. Positions Ala-2–Pro-8 form a cross-link, cyclopeptide (Ala-Pro). A cross-link (2'-cysteinyl-6'-hydroxytryptophan sulfoxide (Trp-Cys)) is located at residues Trp-3–Cys-7. Residues Cys-9–Lys-23 constitute a propeptide that is removed on maturation.

The protein belongs to the MSDIN fungal toxin family. Post-translationally, processed by the macrocyclase-peptidase enzyme POPB to yield a toxic cyclic heptapeptide. POPB first removes 10 residues from the N-terminus. Conformational trapping of the remaining peptide forces the enzyme to release this intermediate rather than proceed to macrocyclization. The enzyme rebinds the remaining peptide in a different conformation and catalyzes macrocyclization of the N-terminal 7 residues.

Its function is as follows. Major toxin that belongs to the bicyclic heptapeptides called phallotoxins. Although structurally related to amatoxins, phallotoxins have a different mode of action, which is the stabilization of F-actin. Phallotoxins are poisonous when administered parenterally, but not orally because of poor absorption. The polypeptide is Phallacidin proprotein (Amanita fuliginea (East Asian brown death cap)).